The following is a 75-amino-acid chain: Translation initiation factor IF-1 (75 aa).

The 72-residue stretch at 1–72 folds into the S1-like domain; the sequence is MSKQDLIEME…TKGRITYRLK (72 aa).

The protein belongs to the IF-1 family. In terms of assembly, component of the 30S ribosomal translation pre-initiation complex which assembles on the 30S ribosome in the order IF-2 and IF-3, IF-1 and N-formylmethionyl-tRNA(fMet); mRNA recruitment can occur at any time during PIC assembly.

The protein localises to the cytoplasm. One of the essential components for the initiation of protein synthesis. Stabilizes the binding of IF-2 and IF-3 on the 30S subunit to which N-formylmethionyl-tRNA(fMet) subsequently binds. Helps modulate mRNA selection, yielding the 30S pre-initiation complex (PIC). Upon addition of the 50S ribosomal subunit IF-1, IF-2 and IF-3 are released leaving the mature 70S translation initiation complex. The protein is Translation initiation factor IF-1 of Synechocystis sp. (strain ATCC 27184 / PCC 6803 / Kazusa).